Reading from the N-terminus, the 345-residue chain is MALVPYPLTRPFLFGMDPEAAHELTLGSIARFQNTPLQCLWSQSRIADPVTVAGLRFPNRIGLAAGLDKNGRCIDGLGAMGFGFIEVGTVTPLGQPGNPKPRMFRLPEKNALINRLGFNNEGLASFLANVQRATSFRRNGGLLGLNIGKNAVTPIENAADDYLIALAGVYPHADYVTVNISSPNTKNLRALQSDAALDALLGALQTRRLALATEHGRSVPMFVKIAPDLDEAQVRVIAATLRHNGIDGVIATNTTLARDAVAGLAHADEAGGLSGAPVLAASNRVIAQLRAELGGAYPIIGVGGVLSGADARSKRAAGADLVQVYTGLIYRGPALVPECARALRG.

Residues 65-69 (AGLDK) and T89 contribute to the FMN site. K69 lines the substrate pocket. 114-118 (NRLGF) is a binding site for substrate. Residues N146 and N179 each contribute to the FMN site. N179 lines the substrate pocket. Residue S182 is the Nucleophile of the active site. N184 is a substrate binding site. FMN contacts are provided by K224 and T252. 253-254 (NT) serves as a coordination point for substrate. FMN contacts are provided by residues G275, G304, and 325–326 (YT).

It belongs to the dihydroorotate dehydrogenase family. Type 2 subfamily. In terms of assembly, monomer. Requires FMN as cofactor.

It is found in the cell membrane. It catalyses the reaction (S)-dihydroorotate + a quinone = orotate + a quinol. Its pathway is pyrimidine metabolism; UMP biosynthesis via de novo pathway; orotate from (S)-dihydroorotate (quinone route): step 1/1. Its function is as follows. Catalyzes the conversion of dihydroorotate to orotate with quinone as electron acceptor. This is Dihydroorotate dehydrogenase (quinone) from Leptothrix cholodnii (strain ATCC 51168 / LMG 8142 / SP-6) (Leptothrix discophora (strain SP-6)).